We begin with the raw amino-acid sequence, 947 residues long: Bifunctional glutamine synthetase adenylyltransferase/adenylyl-removing enzyme (947 aa).

Positions Met-1–Glu-440 are adenylyl removase. Residues Ser-450 to Val-947 are adenylyl transferase.

The protein belongs to the GlnE family. Requires Mg(2+) as cofactor.

The enzyme catalyses [glutamine synthetase]-O(4)-(5'-adenylyl)-L-tyrosine + phosphate = [glutamine synthetase]-L-tyrosine + ADP. The catalysed reaction is [glutamine synthetase]-L-tyrosine + ATP = [glutamine synthetase]-O(4)-(5'-adenylyl)-L-tyrosine + diphosphate. Its function is as follows. Involved in the regulation of glutamine synthetase GlnA, a key enzyme in the process to assimilate ammonia. When cellular nitrogen levels are high, the C-terminal adenylyl transferase (AT) inactivates GlnA by covalent transfer of an adenylyl group from ATP to specific tyrosine residue of GlnA, thus reducing its activity. Conversely, when nitrogen levels are low, the N-terminal adenylyl removase (AR) activates GlnA by removing the adenylyl group by phosphorolysis, increasing its activity. The regulatory region of GlnE binds the signal transduction protein PII (GlnB) which indicates the nitrogen status of the cell. The protein is Bifunctional glutamine synthetase adenylyltransferase/adenylyl-removing enzyme of Salmonella arizonae (strain ATCC BAA-731 / CDC346-86 / RSK2980).